The following is a 143-amino-acid chain: Transcriptional regulator MraZ (143 aa).

SpoVT-AbrB domains lie at 5 to 47 and 76 to 119; these read TYTP…PRSE and TDEQ…DAQA.

This sequence belongs to the MraZ family. Forms oligomers.

The protein resides in the cytoplasm. Its subcellular location is the nucleoid. This Mycobacterium ulcerans (strain Agy99) protein is Transcriptional regulator MraZ.